The chain runs to 206 residues: Small ribosomal subunit protein uS4A (206 aa).

Residues 98 to 164 form the S4 RNA-binding domain; that stretch reads LRLDNVAYKL…EKFKTFAENP (67 aa).

This sequence belongs to the universal ribosomal protein uS4 family. In terms of assembly, part of the 30S ribosomal subunit. Contacts protein S5. The interaction surface between S4 and S5 is involved in control of translational fidelity.

Functionally, one of the primary rRNA binding proteins, it binds directly to 16S rRNA where it nucleates assembly of the body of the 30S subunit. With S5 and S12 plays an important role in translational accuracy. The polypeptide is Small ribosomal subunit protein uS4A (rspD1) (Clostridium acetobutylicum (strain ATCC 824 / DSM 792 / JCM 1419 / IAM 19013 / LMG 5710 / NBRC 13948 / NRRL B-527 / VKM B-1787 / 2291 / W)).